The chain runs to 254 residues: Putative biopolymer transport protein ExbB-like 1 (254 aa).

Transmembrane regions (helical) follow at residues 39–59 (GGVV…TAFE), 141–161 (LETI…TGLI), and 185–205 (IGEA…ALLV).

The protein belongs to the ExbB/TolQ family.

Its subcellular location is the cell inner membrane. Its function is as follows. Involved in the TonB-dependent energy-dependent transport of various receptor-bound substrates. Protects ExbD from proteolytic degradation and functionally stabilizes TonB. The chain is Putative biopolymer transport protein ExbB-like 1 from Synechocystis sp. (strain ATCC 27184 / PCC 6803 / Kazusa).